Consider the following 1099-residue polypeptide: 1-phosphatidylinositol 4,5-bisphosphate phosphodiesterase 1 (1099 aa).

Over residues 1-10 (MLESLNRRNS) the composition is skewed to basic and acidic residues. Disordered stretches follow at residues 1–109 (MLES…SSTT) and 128–164 (ESRS…KSIQ). 2 stretches are compositionally biased toward low complexity: residues 43 to 66 (PPKS…KSDL) and 86 to 109 (PKQQ…SSTT). A compositionally biased stretch (polar residues) spans 131–141 (SIVSNNGGSPM). A compositionally biased stretch (low complexity) spans 142 to 155 (SDSTTVTSTLSTDT). Positions 566-726 (YDYPLNEYFI…LKHKFIIKVK (161 aa)) constitute a PI-PLC X-box domain. Residues His-579 and His-642 contribute to the active site. Residues Lys-724 and Lys-726 each coordinate substrate. Positions 742 to 780 (FTTSTTTTTTTTTTTTTATSLSEDNENNKSNSSSTSSFI) are disordered. Residues 743 to 778 (TTSTTTTTTTTTTTTTATSLSEDNENNKSNSSSTSS) are compositionally biased toward low complexity. The PI-PLC Y-box domain occupies 794 to 912 (ELSNLGIYTQ…GYVLKPSVLR (119 aa)). Positions 823 and 852 each coordinate substrate. Residues 917–1071 (KSSSSNVDTR…QGYRYIYLND (155 aa)) enclose the C2 domain.

The enzyme catalyses a 1,2-diacyl-sn-glycero-3-phospho-(1D-myo-inositol-4,5-bisphosphate) + H2O = 1D-myo-inositol 1,4,5-trisphosphate + a 1,2-diacyl-sn-glycerol + H(+). Functionally, the production of the second messenger molecules diacylglycerol (DAG) and inositol 1,4,5-trisphosphate (IP3) is mediated by activated phosphatidylinositol-specific phospholipase C enzymes. This is 1-phosphatidylinositol 4,5-bisphosphate phosphodiesterase 1 (PLC1) from Candida albicans (Yeast).